Here is a 250-residue protein sequence, read N- to C-terminus: Cellulose biosynthesis protein BcsQ (250 aa).

ATP is bound at residue 9 to 16; that stretch reads VRGGVGTT.

It belongs to the BcsQ family.

The protein localises to the cytoplasm. In terms of biological role, essential for cellulose biosynthesis, shown for strain 1094, a commensal, natural cellulose producer. Also shown in strain W3110 which has a restored reading frame (TAG stop codon to TTG for amino acid 6, called strain AR3110), this protein. May play a role in subcellular localization of an active cellulose biosynthesis apparatus at the bacterial cell pole. The combination of cellulose and the curli fiber network confer cohesion, elasticity and tissue-like properties to colonies. This is Cellulose biosynthesis protein BcsQ from Escherichia coli (strain K12).